Reading from the N-terminus, the 397-residue chain is Acetate kinase (397 aa).

N7 is a binding site for Mg(2+). K14 provides a ligand contact to ATP. R91 provides a ligand contact to substrate. D148 (proton donor/acceptor) is an active-site residue. ATP-binding positions include 208 to 212 (HLGNG), 283 to 285 (DFR), and 331 to 335 (GIGEN). Mg(2+) is bound at residue E384.

This sequence belongs to the acetokinase family. In terms of assembly, homodimer. It depends on Mg(2+) as a cofactor. Requires Mn(2+) as cofactor.

The protein resides in the cytoplasm. It catalyses the reaction acetate + ATP = acetyl phosphate + ADP. The protein operates within metabolic intermediate biosynthesis; acetyl-CoA biosynthesis; acetyl-CoA from acetate: step 1/2. Functionally, catalyzes the formation of acetyl phosphate from acetate and ATP. Can also catalyze the reverse reaction. In Treponema denticola (strain ATCC 35405 / DSM 14222 / CIP 103919 / JCM 8153 / KCTC 15104), this protein is Acetate kinase.